Here is a 338-residue protein sequence, read N- to C-terminus: Peptidyl-prolyl cis-trans isomerase cyp11 (338 aa).

Residues 7–172 (FFDIDVDGNR…HNVMIANCGE (166 aa)) form the PPIase cyclophilin-type domain. Residues 186-338 (ASAVSDESED…RGRFKYRPTY (153 aa)) form a disordered region. Acidic residues predominate over residues 208 to 218 (DDSSSDEDSEE). Residues 223-242 (RTKKKRSRKHSKKDKKKKKR) are compositionally biased toward basic residues. Residues 243–309 (ESSNRKRSPE…PEKRSSERRV (67 aa)) show a composition bias toward basic and acidic residues. Basic residues predominate over residues 329 to 338 (RGRFKYRPTY).

It belongs to the cyclophilin-type PPIase family.

It carries out the reaction [protein]-peptidylproline (omega=180) = [protein]-peptidylproline (omega=0). PPIases accelerate the folding of proteins. It catalyzes the cis-trans isomerization of proline imidic peptide bonds in oligopeptides. The sequence is that of Peptidyl-prolyl cis-trans isomerase cyp11 (cyp11) from Rhizopus delemar (strain RA 99-880 / ATCC MYA-4621 / FGSC 9543 / NRRL 43880) (Mucormycosis agent).